A 412-amino-acid polypeptide reads, in one-letter code: Multifunctional CCA protein (412 aa).

Residues Gly-8 and Arg-11 each coordinate ATP. Gly-8 and Arg-11 together coordinate CTP. Mg(2+) contacts are provided by Asp-21 and Asp-23. Arg-91, Arg-137, and Arg-140 together coordinate ATP. Residues Arg-91, Arg-137, and Arg-140 each contribute to the CTP site. Residues 226 to 327 (TGEHVLMVVE…VKVLERCDAL (102 aa)) form the HD domain.

This sequence belongs to the tRNA nucleotidyltransferase/poly(A) polymerase family. Bacterial CCA-adding enzyme type 1 subfamily. Monomer. Can also form homodimers and oligomers. Mg(2+) serves as cofactor. The cofactor is Ni(2+).

It carries out the reaction a tRNA precursor + 2 CTP + ATP = a tRNA with a 3' CCA end + 3 diphosphate. The enzyme catalyses a tRNA with a 3' CCA end + 2 CTP + ATP = a tRNA with a 3' CCACCA end + 3 diphosphate. Catalyzes the addition and repair of the essential 3'-terminal CCA sequence in tRNAs without using a nucleic acid template. Adds these three nucleotides in the order of C, C, and A to the tRNA nucleotide-73, using CTP and ATP as substrates and producing inorganic pyrophosphate. tRNA 3'-terminal CCA addition is required both for tRNA processing and repair. Also involved in tRNA surveillance by mediating tandem CCA addition to generate a CCACCA at the 3' terminus of unstable tRNAs. While stable tRNAs receive only 3'-terminal CCA, unstable tRNAs are marked with CCACCA and rapidly degraded. This chain is Multifunctional CCA protein, found in Azoarcus sp. (strain BH72).